The primary structure comprises 200 residues: Prostamide/prostaglandin F synthase (200 aa).

The protein belongs to the peroxiredoxin-like PRXL2 family. Prostamide/prostaglandin F synthase subfamily.

Its subcellular location is the cytoplasm. It is found in the cytosol. The enzyme catalyses prostaglandin H2 + [thioredoxin]-dithiol = prostaglandin F2alpha + [thioredoxin]-disulfide. The catalysed reaction is prostamide F2alpha + [thioredoxin]-disulfide = prostamide H2 + [thioredoxin]-dithiol. Functionally, catalyzes the reduction of prostaglandin-ethanolamide H(2) (prostamide H(2)) to prostamide F(2alpha) with NADPH as proton donor. Also able to reduce prostaglandin H(2) to prostaglandin F(2alpha). The sequence is that of Prostamide/prostaglandin F synthase (prxl2b) from Salmo salar (Atlantic salmon).